Reading from the N-terminus, the 312-residue chain is Bark storage protein B (312 aa).

Positions 1–24 (MPQQSMQASLRDPIAEIERSNCKI) are cleaved as a signal peptide. N70 carries N-linked (GlcNAc...) asparagine glycosylation.

This sequence to wound-inducible poplar endochitinases. In terms of assembly, monomer. Bark tissue.

Its function is as follows. May play a role in nitrogen storage. The polypeptide is Bark storage protein B (BSP) (Populus deltoides (Eastern poplar)).